A 295-amino-acid chain; its full sequence is Myosin light chain kinase A (295 aa).

The 258-residue stretch at 8-265 (YEFKEELGRG…ATNALNHPWL (258 aa)) folds into the Protein kinase domain. ATP-binding positions include 14 to 22 (LGRGAFSIV) and Lys37. Asp130 serves as the catalytic Proton acceptor. Thr166 and Thr289 each carry phosphothreonine. The autoinhibitory domain stretch occupies residues 264–295 (WLKSNNSNNTIDTVKMKEYIVERQKTQTKLVN).

The protein belongs to the protein kinase superfamily. CAMK Ser/Thr protein kinase family. CaMK subfamily. In terms of processing, autophosphorylated. Transiently phosphorylated on Thr-166 and Thr-289. This phosphorylation is gbpC-dependent.

It carries out the reaction L-seryl-[myosin light chain] + ATP = O-phospho-L-seryl-[myosin light chain] + ADP + H(+). It catalyses the reaction L-threonyl-[myosin light chain] + ATP = O-phospho-L-threonyl-[myosin light chain] + ADP + H(+). Its activity is regulated as follows. Possesses an autoinhibitory domain. Autophosphorylation appears to increase the enzymatic activity. Activation is gbdC-dependent. Does not have a calmodulin-binding domain. Functionally, phosphorylates a specific serine in the N-terminus of a myosin light chain. Phosphorylates regulatory myosin light chain (mlcR) during chemotaxis. mlcR phosphorylation increases the motility and actin-activated ATPase activity of myosin, contributing to chemotaxis. In Dictyostelium discoideum (Social amoeba), this protein is Myosin light chain kinase A (mlkA).